Here is a 303-residue protein sequence, read N- to C-terminus: Glycine--tRNA ligase alpha subunit (303 aa).

Belongs to the class-II aminoacyl-tRNA synthetase family. Tetramer of two alpha and two beta subunits.

It is found in the cytoplasm. The catalysed reaction is tRNA(Gly) + glycine + ATP = glycyl-tRNA(Gly) + AMP + diphosphate. This is Glycine--tRNA ligase alpha subunit from Salmonella paratyphi A (strain ATCC 9150 / SARB42).